Here is a 1054-residue protein sequence, read N- to C-terminus: Translation initiation factor IF-2 (1054 aa).

2 disordered regions span residues 48 to 390 (RSKL…LDLD) and 409 to 458 (LARP…GTEP). Pro residues predominate over residues 65 to 76 (KPPSESLPPEPP). The span at 160-169 (SEATQKPETV) shows a compositional bias: polar residues. Positions 179 to 193 (SESAAAKASGSEPSP) are enriched in low complexity. Composition is skewed to pro residues over residues 221 to 235 (PQKA…PSEA) and 304 to 316 (PTRP…PPEP). A compositionally biased stretch (basic residues) spans 365–378 (RAARVQAKRKRSRR). The span at 421-437 (PPAATAAPPARPRPAAR) shows a compositional bias: low complexity. The region spanning 545 to 718 (SRPPVVTIMG…LLVADVAELQ (174 aa)) is the tr-type G domain. The interval 554–561 (GHVDHGKT) is G1. 554–561 (GHVDHGKT) serves as a coordination point for GTP. Residues 579 to 583 (GITQR) are G2. The interval 604–607 (DTPG) is G3. Residues 604–608 (DTPGH) and 658–661 (NKID) contribute to the GTP site. The G4 stretch occupies residues 658-661 (NKID). Residues 694–696 (SAL) are G5.

Belongs to the TRAFAC class translation factor GTPase superfamily. Classic translation factor GTPase family. IF-2 subfamily.

Its subcellular location is the cytoplasm. One of the essential components for the initiation of protein synthesis. Protects formylmethionyl-tRNA from spontaneous hydrolysis and promotes its binding to the 30S ribosomal subunits. Also involved in the hydrolysis of GTP during the formation of the 70S ribosomal complex. The polypeptide is Translation initiation factor IF-2 (Synechococcus sp. (strain JA-2-3B'a(2-13)) (Cyanobacteria bacterium Yellowstone B-Prime)).